The sequence spans 724 residues: Catalase-peroxidase (724 aa).

A cross-link (tryptophyl-tyrosyl-methioninium (Trp-Tyr) (with M-252)) is located at residues 98–226 (WHSAGTYRIA…LATVMMGLIY (129 aa)). His99 serves as the catalytic Proton acceptor. Positions 226–252 (YVNPEGVDGNPDPLKTAQDMRVTFARM) form a cross-link, tryptophyl-tyrosyl-methioninium (Tyr-Met) (with W-98). Position 267 (His267) interacts with heme b.

The protein belongs to the peroxidase family. Peroxidase/catalase subfamily. Homodimer or homotetramer. Requires heme b as cofactor. In terms of processing, formation of the three residue Trp-Tyr-Met cross-link is important for the catalase, but not the peroxidase activity of the enzyme.

It catalyses the reaction H2O2 + AH2 = A + 2 H2O. The enzyme catalyses 2 H2O2 = O2 + 2 H2O. Functionally, bifunctional enzyme with both catalase and broad-spectrum peroxidase activity. The chain is Catalase-peroxidase from Vibrio cholerae serotype O1 (strain ATCC 39541 / Classical Ogawa 395 / O395).